We begin with the raw amino-acid sequence, 352 residues long: Holliday junction branch migration complex subunit RuvB (352 aa).

The segment at 4 to 185 is large ATPase domain (RuvB-L); the sequence is ADRLIAATGP…FGIVQRLEFY (182 aa). ATP-binding positions include Ile-24, Arg-25, Gly-66, Lys-69, Thr-70, Thr-71, 132-134, Arg-175, Tyr-185, and Arg-222; that span reads EDF. Mg(2+) is bound at residue Thr-70. Residues 186–256 form a small ATPAse domain (RuvB-S) region; that stretch reads STADLATIVS…IADLALNLLD (71 aa). Residues 259–352 are head domain (RuvB-H); sequence ERGFDHQDRR…VDEFLDAVDD (94 aa). Residues Arg-295, Arg-314, and Arg-319 each coordinate DNA.

It belongs to the RuvB family. Homohexamer. Forms an RuvA(8)-RuvB(12)-Holliday junction (HJ) complex. HJ DNA is sandwiched between 2 RuvA tetramers; dsDNA enters through RuvA and exits via RuvB. An RuvB hexamer assembles on each DNA strand where it exits the tetramer. Each RuvB hexamer is contacted by two RuvA subunits (via domain III) on 2 adjacent RuvB subunits; this complex drives branch migration. In the full resolvosome a probable DNA-RuvA(4)-RuvB(12)-RuvC(2) complex forms which resolves the HJ.

The protein resides in the cytoplasm. It carries out the reaction ATP + H2O = ADP + phosphate + H(+). Its function is as follows. The RuvA-RuvB-RuvC complex processes Holliday junction (HJ) DNA during genetic recombination and DNA repair, while the RuvA-RuvB complex plays an important role in the rescue of blocked DNA replication forks via replication fork reversal (RFR). RuvA specifically binds to HJ cruciform DNA, conferring on it an open structure. The RuvB hexamer acts as an ATP-dependent pump, pulling dsDNA into and through the RuvAB complex. RuvB forms 2 homohexamers on either side of HJ DNA bound by 1 or 2 RuvA tetramers; 4 subunits per hexamer contact DNA at a time. Coordinated motions by a converter formed by DNA-disengaged RuvB subunits stimulates ATP hydrolysis and nucleotide exchange. Immobilization of the converter enables RuvB to convert the ATP-contained energy into a lever motion, pulling 2 nucleotides of DNA out of the RuvA tetramer per ATP hydrolyzed, thus driving DNA branch migration. The RuvB motors rotate together with the DNA substrate, which together with the progressing nucleotide cycle form the mechanistic basis for DNA recombination by continuous HJ branch migration. Branch migration allows RuvC to scan DNA until it finds its consensus sequence, where it cleaves and resolves cruciform DNA. In Pseudomonas fluorescens (strain ATCC BAA-477 / NRRL B-23932 / Pf-5), this protein is Holliday junction branch migration complex subunit RuvB.